Reading from the N-terminus, the 304-residue chain is 17-beta-hydroxysteroid dehydrogenase 13 (304 aa).

A signal peptide spans 1–19 (MNLILEFLLLVGVIIYSYL). Ser33 is subject to Phosphoserine. 40 to 67 (LITGAGHGIGRLTAYEFAKQKSRLVLWD) lines the NAD(+) pocket. Lys79 bears the N6-acetyllysine mark. A substrate-binding site is contributed by Ser172. Tyr185 functions as the Proton acceptor in the catalytic mechanism. Lys189 contributes to the NAD(+) binding site. The disordered stretch occupies residues 276 to 304 (SSKHPHGGSQQPVTPIPGDLTPSSDFLKH).

This sequence belongs to the short-chain dehydrogenases/reductases (SDR) family. Expressed predominantly in the liver (at protein level).

Its subcellular location is the lipid droplet. The protein resides in the endoplasmic reticulum. It catalyses the reaction 17beta-estradiol + NAD(+) = estrone + NADH + H(+). The catalysed reaction is all-trans-retinol + NAD(+) = all-trans-retinal + NADH + H(+). It carries out the reaction all-trans-retinal + NAD(+) + H2O = all-trans-retinoate + NADH + 2 H(+). In terms of biological role, plays a pivotal role in hepatic lipid metabolism. In vitro, it catalyzes the oxidation of a variety of lipid substrates, including 17beta-estradiol, retinol, retinal, and leukotriene B4. This is 17-beta-hydroxysteroid dehydrogenase 13 (Hsd17b13) from Mus musculus (Mouse).